The sequence spans 729 residues: Fatty acid oxidation complex subunit alpha (729 aa).

Residues 1-189 form an enoyl-CoA hydratase/isomerase region; that stretch reads MLYKGDTLYL…KIGLVDGVVK (189 aa). Asp296 provides a ligand contact to substrate. Residues 311-729 are 3-hydroxyacyl-CoA dehydrogenase; the sequence is ETPKHAAVLG…ARPVGELKTA (419 aa). NAD(+) is bound by residues Met324, Asp343, 400 to 402, Lys407, and Ser429; that span reads VVE. The active-site For 3-hydroxyacyl-CoA dehydrogenase activity is the His450. Asn453 contacts NAD(+). Substrate is bound by residues Asn500 and Tyr660.

The protein in the N-terminal section; belongs to the enoyl-CoA hydratase/isomerase family. In the C-terminal section; belongs to the 3-hydroxyacyl-CoA dehydrogenase family. As to quaternary structure, heterotetramer of two alpha chains (FadB) and two beta chains (FadA).

It carries out the reaction a (3S)-3-hydroxyacyl-CoA + NAD(+) = a 3-oxoacyl-CoA + NADH + H(+). It catalyses the reaction a (3S)-3-hydroxyacyl-CoA = a (2E)-enoyl-CoA + H2O. The enzyme catalyses a 4-saturated-(3S)-3-hydroxyacyl-CoA = a (3E)-enoyl-CoA + H2O. The catalysed reaction is (3S)-3-hydroxybutanoyl-CoA = (3R)-3-hydroxybutanoyl-CoA. It carries out the reaction a (3Z)-enoyl-CoA = a 4-saturated (2E)-enoyl-CoA. It catalyses the reaction a (3E)-enoyl-CoA = a 4-saturated (2E)-enoyl-CoA. The protein operates within lipid metabolism; fatty acid beta-oxidation. Its function is as follows. Involved in the aerobic and anaerobic degradation of long-chain fatty acids via beta-oxidation cycle. Catalyzes the formation of 3-oxoacyl-CoA from enoyl-CoA via L-3-hydroxyacyl-CoA. It can also use D-3-hydroxyacyl-CoA and cis-3-enoyl-CoA as substrate. The protein is Fatty acid oxidation complex subunit alpha of Enterobacter cloacae.